The following is an 823-amino-acid chain: MAFPHLQQPSFLLASLKADSINKPFAQRCQDLVKVIEDFPAKELHAVFPWLVESIFGSLDGVLVGWNLRCLQGRVNPVEYSTAMEFLDPSGPMMKLVYKLQAEDYNFDFPVSCLPGPVKASIQENVLPDSPLYHNKVQFPPTGGLGLNLALNPFEYYMFYFALSLISQKPMSMTLHVRTSDCAYFTLVDRYLSWFLPTEGSVPPPLCSSPGGSSPSPAPRTPAMPFASYGLHTSLLKRHISHQTSVNADPASHEIWRSETLLQVFVEMWLHHYSLEMYQKMQSPHAKLEVLHYRLTVSSALHSPAQPSLQALHAYQESFTPTEEHVLVVRLLLKHLHAFANSLKPDQASPSAHSHATSPLEEFKRAAVPRFVQQKLYVFLQHCFGHWPLDATFRAVLEMWLSYLQPWRYAPEKQAQGSDPQPRCVSEKWAPFIQENLLMYTKLFVSFLNRALRTDLVSPKNALMVFRVAKVFAQPNLAEMIQKGEQLFLEPELIIPHRQHRLFTVTTSFLSPWPPVVTDASFKVKSHVYSLEGQDCKYTPMFGPEIRTLVLRLAQLITQAKQTAKSISDQYVESPTGRSFLSWLTFGLTDTNSCYPANDLDEIGQDSIRKTDEYLEKALEYLRQIFRLSEAQLAQLTLALGSARDENGKQQLPDCIVGEEGLILTPLGRYQIINGLRRFEIEYQGDLELQPIRSYEITSLVRALFRLSSAINRRFAGQMAALCSRNDFLGSFCRYHLTEPALSNRHLLSPVGRRQVTNPARGPRLSLRFLGSYRTLLLLLMAFFVASLFCIGPLSCSLLLVLGYVLYAIAMTLLTERGKLHQL.

Phosphoserine occurs at positions 130 and 245. Thr-665 carries the post-translational modification Phosphothreonine. A Phosphoserine modification is found at Ser-749. Residues 776 to 796 (LLLLLMAFFVASLFCIGPLSC) form a helical membrane-spanning segment.

It depends on Mg(2+) as a cofactor. In terms of tissue distribution, expressed in skeletal muscle (at protein level). As to expression, expressed in skeletal muscle but a lower levels than isoform 1 (at protein level).

The protein resides in the endoplasmic reticulum membrane. It localises to the golgi apparatus membrane. Its subcellular location is the nucleus envelope. The protein localises to the cell membrane. It is found in the sarcolemma. It catalyses the reaction a sphingomyelin + H2O = phosphocholine + an N-acylsphing-4-enine + H(+). Activated by phosphatidylserine and tumor necrosis factor (TNF). Inhibited by scyphostatin. Catalyzes the hydrolysis of membrane sphingomyelin to form phosphorylcholine and ceramide. It has a relevant role in the homeostasis of membrane sphingolipids, thereby influencing membrane integrity, and endoplasmic reticulum organization and function. May sensitize cells to DNA damage-induced apoptosis. In skeletal muscle, mediates TNF-stimulated oxidant production. The chain is Sphingomyelin phosphodiesterase 4 (Smpd4) from Mus musculus (Mouse).